Here is a 182-residue protein sequence, read N- to C-terminus: Large ribosomal subunit protein uL6 (182 aa).

The protein belongs to the universal ribosomal protein uL6 family. As to quaternary structure, part of the 50S ribosomal subunit.

Its function is as follows. This protein binds to the 23S rRNA, and is important in its secondary structure. It is located near the subunit interface in the base of the L7/L12 stalk, and near the tRNA binding site of the peptidyltransferase center. In Dehalococcoides mccartyi (strain ATCC BAA-2100 / JCM 16839 / KCTC 5957 / BAV1), this protein is Large ribosomal subunit protein uL6.